Reading from the N-terminus, the 338-residue chain is Protein SGT1 homolog (338 aa).

A2 is subject to N-acetylalanine. TPR repeat units follow at residues 11–45 (AASR…KPDD), 46–79 (APYY…NPNS), and 80–113 (STAL…NSAD). Residues 142–231 (QSKIKYDWYQ…PEAVRWEKLE (90 aa)) form the CS domain. The 90-residue stretch at 249-338 (LYPSSSHYTR…PPDDMEWKKY (90 aa)) folds into the SGS domain. At S254 the chain carries Phosphoserine. T257 is modified (phosphothreonine). K268 participates in a covalent cross-link: Glycyl lysine isopeptide (Lys-Gly) (interchain with G-Cter in SUMO1); alternate. K268 is covalently cross-linked (Glycyl lysine isopeptide (Lys-Gly) (interchain with G-Cter in SUMO2); alternate). S304 carries the post-translational modification Phosphoserine.

Belongs to the SGT1 family. As to quaternary structure, probably associates with SCF (SKP1-CUL1-F-box protein) complex through interaction with SKP1. Interacts with S100A6. Interacts with HSP90. In terms of processing, phosphorylated at Ser-254 and Ser-304, dephosphorylation promotes nuclear translocation, most likely due to disruption of the SUGT1-HSP90 complex.

It is found in the cytoplasm. The protein resides in the nucleus. May play a role in ubiquitination and subsequent proteasomal degradation of target proteins. The polypeptide is Protein SGT1 homolog (Bos taurus (Bovine)).